Here is a 37-residue protein sequence, read N- to C-terminus: Large ribosomal subunit protein bL36c (37 aa).

Belongs to the bacterial ribosomal protein bL36 family.

The protein resides in the plastid. It localises to the chloroplast. The protein is Large ribosomal subunit protein bL36c of Nicotiana tomentosiformis (Tobacco).